Here is a 69-residue protein sequence, read N- to C-terminus: Probable Sec-independent protein translocase protein TatE (69 aa).

The chain crosses the membrane as a helical span at residues 1 to 21 (MEGISIAKLLVIGALIVLLFG). A disordered region spans residues 45 to 69 (DDQPAAKSSAQDEHPAAISETRPKE). A compositionally biased stretch (basic and acidic residues) spans 54–69 (AQDEHPAAISETRPKE).

The protein belongs to the TatA/E family. TatE subfamily.

Its subcellular location is the cell inner membrane. In terms of biological role, part of the twin-arginine translocation (Tat) system that transports large folded proteins containing a characteristic twin-arginine motif in their signal peptide across membranes. TatE shares overlapping functions with TatA. The protein is Probable Sec-independent protein translocase protein TatE of Dickeya chrysanthemi (strain Ech1591) (Dickeya zeae (strain Ech1591)).